The primary structure comprises 673 residues: RAS guanyl-releasing protein 4 (673 aa).

Composition is skewed to basic residues over residues 1–10 (MNRKDIKRKS) and 20–32 (GRGR…RHKT). 2 disordered regions span residues 1–34 (MNRK…KTCP) and 164–188 (LGDA…PGLG). The region spanning 49 to 175 (GVLSESSCSE…DASSLLSPGG (127 aa)) is the N-terminal Ras-GEF domain. Low complexity predominate over residues 164–173 (LGDASSLLSP). Positions 201–432 (ETEELAQHLT…YELSYAREPR (232 aa)) constitute a Ras-GEF domain. The region spanning 466–501 (HVEQLVESVFKNYDPEGRGSISLEDFERLSGNFPFA) is the EF-hand domain. The segment at 540–590 (LHAFQEVTFRKPTFCHSCSGFLWGVTKQGYRCRDCGLCCHRHCRDQVRVEC) adopts a Phorbol-ester/DAG-type zinc-finger fold. Residues 592-633 (KRPETKGDPGPPGAPVPATSLPPANCGSEESLSYTLSPDPES) form a disordered region.

This sequence belongs to the RASGRP family. As to expression, expressed by mast cells and their progenitors (at protein level). Expressed by dendritic cells. Expressed in neutrophils.

Its subcellular location is the cytoplasm. The protein resides in the cell membrane. Functions as a cation- and diacylglycerol (DAG)-regulated nucleotide exchange factor activating Ras through the exchange of bound GDP for GTP. In neutrophils, participates in a phospholipase C-activating N-formyl peptide-activated GPCR (G protein-coupled receptor) signaling pathway by promoting Ras-mediated activation of PIK3CG/PI3Kgamma to promote neutrophil functional responses. In CD117(+) dendritic cells and mast cells, participates in an lipopolysaccharide (LPS)-activated signaling pathway that stimulates the production of interferon-gamma and other pro-inflammatory cytokines by natural killer (NK) cells. May function in mast cell differentiation. Does not appear to be required for the development of B-cells, DC-cells, T-cells, or NK-cells. Functionally, binds diacylglycerol (DAG). In terms of biological role, unable to bind diacylglycerol (DAG). This chain is RAS guanyl-releasing protein 4 (Rasgrp4), found in Mus musculus (Mouse).